The primary structure comprises 227 residues: Small ribosomal subunit protein uS7 (227 aa).

2 stretches are compositionally biased toward acidic residues: residues 1–12 (MSESDTDPDIDD) and 20–31 (NDVDVAVDESES). Residues 1–43 (MSESDTDPDIDDDAHNNGDNDVDVAVDESESAETTTDTDTASA) are disordered. Residues 32-43 (AETTTDTDTASA) are compositionally biased toward low complexity.

The protein belongs to the universal ribosomal protein uS7 family. Part of the 30S ribosomal subunit.

Its function is as follows. One of the primary rRNA binding proteins, it binds directly to 16S rRNA where it nucleates assembly of the head domain of the 30S subunit. Is located at the subunit interface close to the decoding center. In Haloquadratum walsbyi (strain DSM 16790 / HBSQ001), this protein is Small ribosomal subunit protein uS7.